The primary structure comprises 345 residues: Putative pyridoxal reductase (345 aa).

Y60 serves as the catalytic Proton donor.

This sequence belongs to the aldo/keto reductase family.

The protein localises to the cytoplasm. It is found in the nucleus. The catalysed reaction is pyridoxine + NADP(+) = pyridoxal + NADPH + H(+). The protein operates within cofactor degradation; B6 vitamer degradation; pyridoxal from pyridoxine (dehydrogenase route): step 1/1. Catalyzes the reduction of pyridoxal (PL) with NADPH and oxidation of pyridoxine (PN) with NADP(+). This chain is Putative pyridoxal reductase, found in Saccharomyces cerevisiae (strain ATCC 204508 / S288c) (Baker's yeast).